The primary structure comprises 237 residues: uncharacterized protein (237 aa).

21–28 contributes to the ATP binding site; sequence GCDGSGKS.

This sequence to E.coli YghR and YghT.

This is an uncharacterized protein from Escherichia coli (strain K12).